The chain runs to 230 residues: Leucyl/phenylalanyl-tRNA--protein transferase (230 aa).

The protein belongs to the L/F-transferase family.

It localises to the cytoplasm. It catalyses the reaction N-terminal L-lysyl-[protein] + L-leucyl-tRNA(Leu) = N-terminal L-leucyl-L-lysyl-[protein] + tRNA(Leu) + H(+). It carries out the reaction N-terminal L-arginyl-[protein] + L-leucyl-tRNA(Leu) = N-terminal L-leucyl-L-arginyl-[protein] + tRNA(Leu) + H(+). The enzyme catalyses L-phenylalanyl-tRNA(Phe) + an N-terminal L-alpha-aminoacyl-[protein] = an N-terminal L-phenylalanyl-L-alpha-aminoacyl-[protein] + tRNA(Phe). Its function is as follows. Functions in the N-end rule pathway of protein degradation where it conjugates Leu, Phe and, less efficiently, Met from aminoacyl-tRNAs to the N-termini of proteins containing an N-terminal arginine or lysine. This Hamiltonella defensa subsp. Acyrthosiphon pisum (strain 5AT) protein is Leucyl/phenylalanyl-tRNA--protein transferase.